The primary structure comprises 178 residues: Acireductone dioxygenase (178 aa).

Residues 1-22 (MKAYWYDNKPGDQREPHDSGRP) are disordered. The segment covering 9–22 (KPGDQREPHDSGRP) has biased composition (basic and acidic residues). Residues H81, H83, E87, and H126 each coordinate Fe(2+). 4 residues coordinate Ni(2+): H81, H83, E87, and H126.

This sequence belongs to the acireductone dioxygenase (ARD) family. The cofactor is Fe(2+). Requires Ni(2+) as cofactor.

The protein resides in the cytoplasm. It is found in the nucleus. It carries out the reaction 1,2-dihydroxy-5-(methylsulfanyl)pent-1-en-3-one + O2 = 4-methylsulfanyl-2-oxobutanoate + formate + 2 H(+). The catalysed reaction is 1,2-dihydroxy-5-(methylsulfanyl)pent-1-en-3-one + O2 = 3-(methylsulfanyl)propanoate + CO + formate + 2 H(+). It functions in the pathway amino-acid biosynthesis; L-methionine biosynthesis via salvage pathway; L-methionine from S-methyl-5-thio-alpha-D-ribose 1-phosphate: step 5/6. In terms of biological role, catalyzes 2 different reactions between oxygen and the acireductone 1,2-dihydroxy-3-keto-5-methylthiopentene (DHK-MTPene) depending upon the metal bound in the active site. Fe-containing acireductone dioxygenase (Fe-ARD) produces formate and 2-keto-4-methylthiobutyrate (KMTB), the alpha-ketoacid precursor of methionine in the methionine recycle pathway. Ni-containing acireductone dioxygenase (Ni-ARD) produces methylthiopropionate, carbon monoxide and formate, and does not lie on the methionine recycle pathway. The sequence is that of Acireductone dioxygenase (adi1) from Emericella nidulans (strain FGSC A4 / ATCC 38163 / CBS 112.46 / NRRL 194 / M139) (Aspergillus nidulans).